A 333-amino-acid chain; its full sequence is Glyceraldehyde-3-phosphate dehydrogenase (333 aa).

Residues 11–12 (RI), D35, and T121 each bind NAD(+). D-glyceraldehyde 3-phosphate contacts are provided by residues 151–153 (SCT) and T182. C152 acts as the Nucleophile in catalysis. N183 provides a ligand contact to NAD(+). Residues R197, 210 to 211 (TG), and R233 each bind D-glyceraldehyde 3-phosphate. Residue N315 coordinates NAD(+).

The protein belongs to the glyceraldehyde-3-phosphate dehydrogenase family. As to quaternary structure, homotetramer.

The protein resides in the cytoplasm. It catalyses the reaction D-glyceraldehyde 3-phosphate + phosphate + NAD(+) = (2R)-3-phospho-glyceroyl phosphate + NADH + H(+). The protein operates within carbohydrate degradation; glycolysis; pyruvate from D-glyceraldehyde 3-phosphate: step 1/5. Catalyzes the oxidative phosphorylation of glyceraldehyde 3-phosphate (G3P) to 1,3-bisphosphoglycerate (BPG) using the cofactor NAD. The first reaction step involves the formation of a hemiacetal intermediate between G3P and a cysteine residue, and this hemiacetal intermediate is then oxidized to a thioester, with concomitant reduction of NAD to NADH. The reduced NADH is then exchanged with the second NAD, and the thioester is attacked by a nucleophilic inorganic phosphate to produce BPG. The polypeptide is Glyceraldehyde-3-phosphate dehydrogenase (gap) (Thermotoga maritima (strain ATCC 43589 / DSM 3109 / JCM 10099 / NBRC 100826 / MSB8)).